The primary structure comprises 172 residues: Small ribosomal subunit protein uS5 (172 aa).

The region spanning 17-80 is the S5 DRBM domain; it reads MREKMIAVNR…EECRRNLVKV (64 aa).

This sequence belongs to the universal ribosomal protein uS5 family. In terms of assembly, part of the 30S ribosomal subunit. Contacts proteins S4 and S8.

Functionally, with S4 and S12 plays an important role in translational accuracy. In terms of biological role, located at the back of the 30S subunit body where it stabilizes the conformation of the head with respect to the body. The sequence is that of Small ribosomal subunit protein uS5 from Paracidovorax citrulli (strain AAC00-1) (Acidovorax citrulli).